We begin with the raw amino-acid sequence, 317 residues long: Malate dehydrogenase (317 aa).

Residues 13-18 and Asp-38 contribute to the NAD(+) site; that span reads GAGNIG. Substrate is bound by residues Arg-87 and Arg-93. NAD(+)-binding positions include Asn-100 and 123 to 125; that span reads VTN. Substrate contacts are provided by Asn-125 and Arg-156. His-180 (proton acceptor) is an active-site residue.

This sequence belongs to the LDH/MDH superfamily. MDH type 3 family.

It carries out the reaction (S)-malate + NAD(+) = oxaloacetate + NADH + H(+). Functionally, catalyzes the reversible oxidation of malate to oxaloacetate. This chain is Malate dehydrogenase, found in Anaplasma marginale (strain Florida).